Here is a 166-residue protein sequence, read N- to C-terminus: Shikimate kinase (166 aa).

11-16 lines the ATP pocket; it reads GSGKST. A Mg(2+)-binding site is contributed by S15. Substrate contacts are provided by D33, R57, and G79. ATP is bound at residue R117. R134 serves as a coordination point for substrate.

The protein belongs to the shikimate kinase family. As to quaternary structure, monomer. Requires Mg(2+) as cofactor.

The protein localises to the cytoplasm. It carries out the reaction shikimate + ATP = 3-phosphoshikimate + ADP + H(+). It functions in the pathway metabolic intermediate biosynthesis; chorismate biosynthesis; chorismate from D-erythrose 4-phosphate and phosphoenolpyruvate: step 5/7. Catalyzes the specific phosphorylation of the 3-hydroxyl group of shikimic acid using ATP as a cosubstrate. The chain is Shikimate kinase from Sulfurihydrogenibium sp. (strain YO3AOP1).